The primary structure comprises 564 residues: Nucleoprotein (564 aa).

Positions 54 to 236 (LRKNKRGEED…VTKDESSINI (183 aa)) are binding site for the cap structure m7GTP. Mn(2+) is bound by residues Asp-380 and Glu-382. Positions 390, 497, 500, and 525 each coordinate Zn(2+). Asp-529 contributes to the Mn(2+) binding site.

Belongs to the arenaviridae nucleocapsid protein family. As to quaternary structure, homomultimerizes to form the nucleocapsid. Binds to viral genomic RNA. Interacts with glycoprotein G2. Interacts with protein Z; this interaction probably directs the encapsidated genome to budding sites. Interacts with protein L; this interaction does not interfere with Z-L interaction. Interacts with host IKBKE (via Protein kinase domain); the interaction inhibits IKBKE kinase activity.

Its subcellular location is the virion. The protein localises to the host cytoplasm. Its function is as follows. Encapsidates the genome, protecting it from nucleases. The encapsidated genomic RNA is termed the nucleocapsid (NC). Serves as template for viral transcription and replication. The increased presence of protein N in host cell does not seem to trigger the switch from transcription to replication as observed in other negative strain RNA viruses. Through the interaction with host IKBKE, strongly inhibits the phosphorylation and nuclear translocation of host IRF3, a protein involved in interferon activation pathway, leading to the inhibition of interferon-beta and IRF3-dependent promoters activation. Also encodes a functional 3'-5' exoribonuclease that degrades preferentially dsRNA substrates and thereby participates in the suppression of interferon induction. The chain is Nucleoprotein from Calomys callosus (Large vesper mouse).